The chain runs to 37 residues: Large ribosomal subunit protein bL36A (37 aa).

It belongs to the bacterial ribosomal protein bL36 family.

In Neisseria meningitidis serogroup C (strain 053442), this protein is Large ribosomal subunit protein bL36A.